Here is a 277-residue protein sequence, read N- to C-terminus: Putative phosphoenolpyruvate synthase regulatory protein (277 aa).

ADP is bound at residue 157–164; that stretch reads GVSRSGKT.

It belongs to the pyruvate, phosphate/water dikinase regulatory protein family. PSRP subfamily.

The catalysed reaction is [pyruvate, water dikinase] + ADP = [pyruvate, water dikinase]-phosphate + AMP + H(+). It carries out the reaction [pyruvate, water dikinase]-phosphate + phosphate + H(+) = [pyruvate, water dikinase] + diphosphate. Bifunctional serine/threonine kinase and phosphorylase involved in the regulation of the phosphoenolpyruvate synthase (PEPS) by catalyzing its phosphorylation/dephosphorylation. The protein is Putative phosphoenolpyruvate synthase regulatory protein of Aromatoleum aromaticum (strain DSM 19018 / LMG 30748 / EbN1) (Azoarcus sp. (strain EbN1)).